The primary structure comprises 82 residues: Sec-independent protein translocase protein TatA (82 aa).

A helical transmembrane segment spans residues 1 to 21 (MGLSTTHLIIFLVIIVLIFGT).

Belongs to the TatA/E family. As to quaternary structure, the Tat system comprises two distinct complexes: a TatABC complex, containing multiple copies of TatA, TatB and TatC subunits, and a separate TatA complex, containing only TatA subunits. Substrates initially bind to the TatABC complex, which probably triggers association of the separate TatA complex to form the active translocon.

It localises to the cell inner membrane. Part of the twin-arginine translocation (Tat) system that transports large folded proteins containing a characteristic twin-arginine motif in their signal peptide across membranes. TatA could form the protein-conducting channel of the Tat system. In Leptothrix cholodnii (strain ATCC 51168 / LMG 8142 / SP-6) (Leptothrix discophora (strain SP-6)), this protein is Sec-independent protein translocase protein TatA.